A 280-amino-acid chain; its full sequence is Probable endonuclease 4 (280 aa).

Histidine 77, histidine 117, glutamate 148, aspartate 180, histidine 183, histidine 215, aspartate 228, histidine 230, and glutamate 259 together coordinate Zn(2+).

This sequence belongs to the AP endonuclease 2 family. It depends on Zn(2+) as a cofactor.

It carries out the reaction Endonucleolytic cleavage to 5'-phosphooligonucleotide end-products.. Functionally, endonuclease IV plays a role in DNA repair. It cleaves phosphodiester bonds at apurinic or apyrimidinic (AP) sites, generating a 3'-hydroxyl group and a 5'-terminal sugar phosphate. In Thermoplasma volcanium (strain ATCC 51530 / DSM 4299 / JCM 9571 / NBRC 15438 / GSS1), this protein is Probable endonuclease 4.